Consider the following 383-residue polypeptide: Aurachin C monooxygenase/isomerase (383 aa).

FAD contacts are provided by residues G15, S47, V128, D285, and 295-299 (GQGGC).

Requires FAD as cofactor.

It carries out the reaction aurachin C + NADH + O2 + H(+) = 4-hydroxy-2-methyl-3-oxo-4-[(2E,6E)-farnesyl]-3,4-dihydroquinoline 1-oxide + NAD(+) + H2O. The enzyme catalyses aurachin C + NADPH + O2 + H(+) = 4-hydroxy-2-methyl-3-oxo-4-[(2E,6E)-farnesyl]-3,4-dihydroquinoline 1-oxide + NADP(+) + H2O. The catalysed reaction is aurachin C + NADH + O2 + H(+) = aurachin C epoxide + NAD(+) + H2O. It catalyses the reaction aurachin C + NADPH + O2 + H(+) = aurachin C epoxide + NADP(+) + H2O. It carries out the reaction aurachin C epoxide = 2-hydroxy-1a-methyl-7a-[(2E,6E)-farnesyl]-1a,2-dihydrooxireno[2,3-b]quinolin-7(7aH)-one. The enzyme catalyses 2-hydroxy-1a-methyl-7a-[(2E,6E)-farnesyl]-1a,2-dihydrooxireno[2,3-b]quinolin-7(7aH)-one = 4-hydroxy-2-methyl-3-oxo-4-[(2E,6E)-farnesyl]-3,4-dihydroquinoline 1-oxide. Its function is as follows. Catalyzes the initial step in the conversion of aurachin C to aurachin B. Catalyzes the epoxidation of the C(2)-C(3) double bond of aurachin C, which is followed by a semipinacol rearrangement, causing migration of the farnesyl group from C(3) to C(4). Accepts both NADH and NADPH, but has a preference for NADH. The sequence is that of Aurachin C monooxygenase/isomerase from Stigmatella aurantiaca.